We begin with the raw amino-acid sequence, 380 residues long: Cytochrome b (380 aa).

4 helical membrane-spanning segments follow: residues 34–54, 78–99, 114–134, and 179–199; these read FGSL…LLAM, WLIR…YLHI, WNTG…GYVL, and FFAL…IHLT. Heme b contacts are provided by histidine 84 and histidine 98. Heme b contacts are provided by histidine 183 and histidine 197. Residue histidine 202 participates in a ubiquinone binding. 4 consecutive transmembrane segments (helical) span residues 227–247, 289–309, 321–341, and 348–368; these read TKDL…AMFS, LGGV…PFLH, LSQL…WVGS, and FIII…ILFP.

The protein belongs to the cytochrome b family. The cytochrome bc1 complex contains 11 subunits: 3 respiratory subunits (MT-CYB, CYC1 and UQCRFS1), 2 core proteins (UQCRC1 and UQCRC2) and 6 low-molecular weight proteins (UQCRH/QCR6, UQCRB/QCR7, UQCRQ/QCR8, UQCR10/QCR9, UQCR11/QCR10 and a cleavage product of UQCRFS1). This cytochrome bc1 complex then forms a dimer. Heme b serves as cofactor.

It localises to the mitochondrion inner membrane. Component of the ubiquinol-cytochrome c reductase complex (complex III or cytochrome b-c1 complex) that is part of the mitochondrial respiratory chain. The b-c1 complex mediates electron transfer from ubiquinol to cytochrome c. Contributes to the generation of a proton gradient across the mitochondrial membrane that is then used for ATP synthesis. The protein is Cytochrome b (MT-CYB) of Amazilia tzacatl (Rufous-tailed hummingbird).